The chain runs to 349 residues: DNA replication and repair protein RecF (349 aa).

30-37 (GKNGSGKT) is an ATP binding site.

This sequence belongs to the RecF family.

Its subcellular location is the cytoplasm. In terms of biological role, the RecF protein is involved in DNA metabolism; it is required for DNA replication and normal SOS inducibility. RecF binds preferentially to single-stranded, linear DNA. It also seems to bind ATP. The sequence is that of DNA replication and repair protein RecF from Francisella tularensis subsp. mediasiatica (strain FSC147).